A 217-amino-acid polypeptide reads, in one-letter code: Small ribosomal subunit protein uS3 (217 aa).

The 70-residue stretch at 24-93 (IKEFLEYKLS…NPQIDVIDVS (70 aa)) folds into the KH type-2 domain.

The protein belongs to the universal ribosomal protein uS3 family. Part of the 30S ribosomal subunit.

In terms of biological role, binds the lower part of the 30S subunit head. This chain is Small ribosomal subunit protein uS3, found in Pyrobaculum islandicum (strain DSM 4184 / JCM 9189 / GEO3).